A 223-amino-acid chain; its full sequence is Ribosomal RNA small subunit methyltransferase G (223 aa).

S-adenosyl-L-methionine-binding positions include Gly-82, Leu-87, 133–134, and Arg-151; that span reads AE.

It belongs to the methyltransferase superfamily. RNA methyltransferase RsmG family.

The protein localises to the cytoplasm. Specifically methylates the N7 position of guanine in position 518 of 16S rRNA. The chain is Ribosomal RNA small subunit methyltransferase G from Corynebacterium glutamicum (strain ATCC 13032 / DSM 20300 / JCM 1318 / BCRC 11384 / CCUG 27702 / LMG 3730 / NBRC 12168 / NCIMB 10025 / NRRL B-2784 / 534).